The following is a 661-amino-acid chain: Probable potassium transport system protein Kup 1 (661 aa).

Residues 1-11 (MKGLFPAGGGN) are compositionally biased toward gly residues. The segment at 1 to 38 (MKGLFPAGGGNPPSSYLSRFLPHRKERSPENVTSGRNG) is disordered. Helical transmembrane passes span 48–68 (LALG…LYTI), 85–105 (IMGV…IKYI), 139–159 (AVVV…GFIT), 177–197 (AAKN…FLVQ), 207–227 (IFGP…LLCI), 251–271 (VHGL…EALY), 286–306 (WFAM…AALL), 324–344 (LLLP…QAMI), 384–404 (LMMV…GLAG), 405–425 (AYGV…FFVA), 436–456 (TAPL…SNLL), and 458–478 (FFDG…VMAS).

Belongs to the HAK/KUP transporter (TC 2.A.72) family.

Its subcellular location is the cell inner membrane. The enzyme catalyses K(+)(in) + H(+)(in) = K(+)(out) + H(+)(out). Transport of potassium into the cell. Likely operates as a K(+):H(+) symporter. The protein is Probable potassium transport system protein Kup 1 of Syntrophobacter fumaroxidans (strain DSM 10017 / MPOB).